We begin with the raw amino-acid sequence, 259 residues long: Phosphoadenosine 5'-phosphosulfate reductase (259 aa).

The active-site Nucleophile; cysteine thiosulfonate intermediate is Cys-244.

Belongs to the PAPS reductase family. CysH subfamily.

The protein resides in the cytoplasm. The enzyme catalyses [thioredoxin]-disulfide + sulfite + adenosine 3',5'-bisphosphate + 2 H(+) = [thioredoxin]-dithiol + 3'-phosphoadenylyl sulfate. The protein operates within sulfur metabolism; hydrogen sulfide biosynthesis; sulfite from sulfate: step 3/3. In terms of biological role, catalyzes the formation of sulfite from phosphoadenosine 5'-phosphosulfate (PAPS) using thioredoxin as an electron donor. This Vibrio parahaemolyticus serotype O3:K6 (strain RIMD 2210633) protein is Phosphoadenosine 5'-phosphosulfate reductase.